A 428-amino-acid polypeptide reads, in one-letter code: Pregnancy-specific beta-1-glycoprotein 3 (428 aa).

An N-terminal signal peptide occupies residues 1-34 (MGPLSAPPCTQRITWKGLLLTALLLNFWNLPTTA). The 110-residue stretch at 35–144 (QVTIEAEPTK…TGHFTFTLYL (110 aa)) folds into the Ig-like V-type domain. Asn104 and Asn111 each carry an N-linked (GlcNAc...) asparagine glycan. Positions 127 to 129 (RGD) match the Cell attachment site motif. 3 consecutive Ig-like C2-type domains span residues 147–234 (PKPS…VTLN), 240–327 (PKPY…VTLN), and 335–410 (PRIY…KSMT). Disulfide bonds link Cys169-Cys217, Cys262-Cys310, and Cys354-Cys394. N-linked (GlcNAc...) asparagine glycans are attached at residues Asn268 and Asn303.

Belongs to the immunoglobulin superfamily. CEA family.

It is found in the secreted. The sequence is that of Pregnancy-specific beta-1-glycoprotein 3 (PSG3) from Homo sapiens (Human).